Here is a 121-residue protein sequence, read N- to C-terminus: UPF0344 protein BC_1150 (121 aa).

A run of 4 helical transmembrane segments spans residues 6–26 (ITAW…YSAG), 38–58 (LMYI…VKTA), 65–85 (WYGL…MVLV), and 92–112 (PTGA…YLGL).

Belongs to the UPF0344 family.

The protein localises to the cell membrane. This is UPF0344 protein BC_1150 from Bacillus cereus (strain ATCC 14579 / DSM 31 / CCUG 7414 / JCM 2152 / NBRC 15305 / NCIMB 9373 / NCTC 2599 / NRRL B-3711).